A 262-amino-acid polypeptide reads, in one-letter code: Carbonic anhydrase 13 (262 aa).

An Alpha-carbonic anhydrase domain is found at 4–261 (LSWGYREHNG…LKGRKVRASF (258 aa)). The active-site Proton donor/acceptor is the histidine 65. Residues histidine 95, histidine 97, and histidine 120 each coordinate Zn(2+). Substrate is bound at residue 200-201 (TV).

It belongs to the alpha-carbonic anhydrase family. Zn(2+) serves as cofactor. As to expression, expressed in thymus, small intestine, spleen, prostate, ovary, colon and testis.

The enzyme catalyses hydrogencarbonate + H(+) = CO2 + H2O. With respect to regulation, inhibited by acetazolamide. Reversible hydration of carbon dioxide. The polypeptide is Carbonic anhydrase 13 (CA13) (Homo sapiens (Human)).